A 107-amino-acid chain; its full sequence is Proteinase inhibitor I-A (107 aa).

The signal sequence occupies residues Met-1–Ala-22. The propeptide occupies Arg-23–Gln-36.

This sequence belongs to the protease inhibitor I13 (potato type I serine protease inhibitor) family.

The protein resides in the secreted. The sequence is that of Proteinase inhibitor I-A (TIMPB) from Nicotiana tabacum (Common tobacco).